The chain runs to 370 residues: Probable butyrate kinase (370 aa).

This sequence belongs to the acetokinase family.

The protein resides in the cytoplasm. The catalysed reaction is butanoate + ATP = butanoyl phosphate + ADP. This is Probable butyrate kinase from Elusimicrobium minutum (strain Pei191).